A 153-amino-acid chain; its full sequence is Riboflavin synthase (153 aa).

It belongs to the DMRL synthase family. Homooligomer. It depends on Mg(2+) as a cofactor.

The catalysed reaction is 2 6,7-dimethyl-8-(1-D-ribityl)lumazine + H(+) = 5-amino-6-(D-ribitylamino)uracil + riboflavin. It participates in cofactor biosynthesis; riboflavin biosynthesis; riboflavin from 2-hydroxy-3-oxobutyl phosphate and 5-amino-6-(D-ribitylamino)uracil: step 2/2. With respect to regulation, inhibited by EDTA. Functionally, the relatively low activity of this enzyme suggested that 6,7-dimethyl-8-ribityllumazine might not be its natural substrate. This is Riboflavin synthase (ribC) from Methanothermobacter marburgensis (strain ATCC BAA-927 / DSM 2133 / JCM 14651 / NBRC 100331 / OCM 82 / Marburg) (Methanobacterium thermoautotrophicum).